Here is a 449-residue protein sequence, read N- to C-terminus: Trigger factor (449 aa).

The region spanning 160–231 (TDQVTIEELG…VQSVQTKQLQ (72 aa)) is the PPIase FKBP-type domain. The segment at 411 to 449 (GQQVAGRQEAGAEQTAQAAEQESGQPQAEGEQAAEQRGE) is disordered. Residues 415–443 (AGRQEAGAEQTAQAAEQESGQPQAEGEQA) are compositionally biased toward low complexity.

The protein belongs to the FKBP-type PPIase family. Tig subfamily.

Its subcellular location is the cytoplasm. It carries out the reaction [protein]-peptidylproline (omega=180) = [protein]-peptidylproline (omega=0). Functionally, involved in protein export. Acts as a chaperone by maintaining the newly synthesized protein in an open conformation. Functions as a peptidyl-prolyl cis-trans isomerase. The chain is Trigger factor from Deinococcus geothermalis (strain DSM 11300 / CIP 105573 / AG-3a).